The chain runs to 437 residues: Chaperone SurA (437 aa).

The first 22 residues, 1–22 (MKNWKFPLISTLLLLLTINVHA), serve as a signal peptide directing secretion. PpiC domains follow at residues 173–274 (TVQY…KIDD) and 283–383 (VTEV…EVLE).

The protein resides in the periplasm. It catalyses the reaction [protein]-peptidylproline (omega=180) = [protein]-peptidylproline (omega=0). Chaperone involved in the correct folding and assembly of outer membrane proteins. Recognizes specific patterns of aromatic residues and the orientation of their side chains, which are found more frequently in integral outer membrane proteins. May act in both early periplasmic and late outer membrane-associated steps of protein maturation. This Aliivibrio fischeri (strain ATCC 700601 / ES114) (Vibrio fischeri) protein is Chaperone SurA.